A 250-amino-acid polypeptide reads, in one-letter code: 3-deoxy-manno-octulosonate cytidylyltransferase (250 aa).

This sequence belongs to the KdsB family.

Its subcellular location is the cytoplasm. It catalyses the reaction 3-deoxy-alpha-D-manno-oct-2-ulosonate + CTP = CMP-3-deoxy-beta-D-manno-octulosonate + diphosphate. The protein operates within nucleotide-sugar biosynthesis; CMP-3-deoxy-D-manno-octulosonate biosynthesis; CMP-3-deoxy-D-manno-octulosonate from 3-deoxy-D-manno-octulosonate and CTP: step 1/1. Its pathway is bacterial outer membrane biogenesis; lipopolysaccharide biosynthesis. Activates KDO (a required 8-carbon sugar) for incorporation into bacterial lipopolysaccharide in Gram-negative bacteria. The sequence is that of 3-deoxy-manno-octulosonate cytidylyltransferase from Francisella tularensis subsp. novicida (strain U112).